We begin with the raw amino-acid sequence, 186 residues long: Dihydrofolate reductase (186 aa).

The DHFR domain occupies 3 to 184 (PLNCIVAVSQ…IKYKFEVYEK (182 aa)). Residues Ala9 and 15–21 (GIGKNGD) each bind NADP(+). 30 to 35 (EYKYFQ) contacts substrate. At Lys32 the chain carries N6-acetyllysine; alternate. Lys32 is modified (N6-succinyllysine; alternate). 54 to 56 (RKT) contacts NADP(+). Arg70 is a substrate binding site. Residues 76–78 (SRE) and 116–123 (GGSSVYKE) contribute to the NADP(+) site. Position 162 is a cysteine derivative; partial (Cys162).

This sequence belongs to the dihydrofolate reductase family. In terms of assembly, homodimer.

It is found in the mitochondrion. It localises to the cytoplasm. The catalysed reaction is (6S)-5,6,7,8-tetrahydrofolate + NADP(+) = 7,8-dihydrofolate + NADPH + H(+). It functions in the pathway cofactor biosynthesis; tetrahydrofolate biosynthesis; 5,6,7,8-tetrahydrofolate from 7,8-dihydrofolate: step 1/1. Key enzyme in folate metabolism. Contributes to the de novo mitochondrial thymidylate biosynthesis pathway. Catalyzes an essential reaction for de novo glycine and purine synthesis, and for DNA precursor synthesis. Binds its own mRNA and that of DHFR2. In Sus scrofa (Pig), this protein is Dihydrofolate reductase (DHFR).